A 183-amino-acid polypeptide reads, in one-letter code: Nucleoside triphosphate pyrophosphatase (183 aa).

Catalysis depends on aspartate 71, which acts as the Proton acceptor.

It belongs to the Maf family. Requires a divalent metal cation as cofactor.

It is found in the cytoplasm. The catalysed reaction is a ribonucleoside 5'-triphosphate + H2O = a ribonucleoside 5'-phosphate + diphosphate + H(+). It carries out the reaction a 2'-deoxyribonucleoside 5'-triphosphate + H2O = a 2'-deoxyribonucleoside 5'-phosphate + diphosphate + H(+). Its function is as follows. Nucleoside triphosphate pyrophosphatase. May have a dual role in cell division arrest and in preventing the incorporation of modified nucleotides into cellular nucleic acids. The polypeptide is Nucleoside triphosphate pyrophosphatase (Campylobacter jejuni subsp. doylei (strain ATCC BAA-1458 / RM4099 / 269.97)).